A 77-amino-acid polypeptide reads, in one-letter code: Large ribosomal subunit protein bL28 (77 aa).

This sequence belongs to the bacterial ribosomal protein bL28 family.

The chain is Large ribosomal subunit protein bL28 from Polynucleobacter necessarius subsp. necessarius (strain STIR1).